The sequence spans 259 residues: Cytosolic Fe-S cluster assembly factor Nubp2 homolog (259 aa).

14-21 (GKGGVGKS) provides a ligand contact to ATP. Residues C188 and C191 each contribute to the [4Fe-4S] cluster site.

The protein belongs to the Mrp/NBP35 ATP-binding proteins family. NUBP2/CFD1 subfamily. In terms of assembly, heterotetramer of 2 Nubp1 and 2 Nubp2 chains. The cofactor is [4Fe-4S] cluster.

Its subcellular location is the cytoplasm. In terms of biological role, component of the cytosolic iron-sulfur (Fe/S) protein assembly (CIA) machinery. Required for maturation of extramitochondrial Fe-S proteins. The Nubp1-Nubp2 heterotetramer forms a Fe-S scaffold complex, mediating the de novo assembly of an Fe-S cluster and its transfer to target apoproteins. The polypeptide is Cytosolic Fe-S cluster assembly factor Nubp2 homolog (Anopheles gambiae (African malaria mosquito)).